The sequence spans 72 residues: Protein kish (72 aa).

Residues 1 to 26 (MVAIFNFQSLLVVILLFICTCTYIRG) form the signal peptide. The Extracellular portion of the chain corresponds to 27–47 (SYPSLLEVRDKHSFSGLPRKA). Residues 48-68 (AIIGERLSPWVSACCLIMGLW) form a helical membrane-spanning segment. Residues 69-72 (TLYN) lie on the Cytoplasmic side of the membrane.

The protein belongs to the KISH family.

The protein localises to the golgi apparatus membrane. Involved in the early part of the secretory pathway. This Dictyostelium discoideum (Social amoeba) protein is Protein kish (tmem167).